The primary structure comprises 265 residues: Phosphonates import ATP-binding protein PhnC 1 (265 aa).

One can recognise an ABC transporter domain in the interval 7–252 (IEVSNLSKSF…KLNEIYGTAA (246 aa)). 39 to 46 (GASGSGKS) contributes to the ATP binding site.

Belongs to the ABC transporter superfamily. Phosphonates importer (TC 3.A.1.9.1) family. As to quaternary structure, the complex is composed of two ATP-binding proteins (PhnC), two transmembrane proteins (PhnE) and a solute-binding protein (PhnD).

The protein localises to the cell inner membrane. It catalyses the reaction phosphonate(out) + ATP + H2O = phosphonate(in) + ADP + phosphate + H(+). Functionally, part of the ABC transporter complex PhnCDE involved in phosphonates import. Responsible for energy coupling to the transport system. In Nostoc sp. (strain PCC 7120 / SAG 25.82 / UTEX 2576), this protein is Phosphonates import ATP-binding protein PhnC 1.